The primary structure comprises 66 residues: Large ribosomal subunit protein bL35 (66 aa).

Basic residues predominate over residues 24-43 (HKKAGKRHNLSKKSKARKRR). The interval 24–44 (HKKAGKRHNLSKKSKARKRRL) is disordered.

It belongs to the bacterial ribosomal protein bL35 family.

The chain is Large ribosomal subunit protein bL35 from Dictyoglomus thermophilum (strain ATCC 35947 / DSM 3960 / H-6-12).